We begin with the raw amino-acid sequence, 256 residues long: 4-hydroxy-tetrahydrodipicolinate reductase (256 aa).

Residues 12–17 (GINGRV), aspartate 39, 86–88 (GTT), and 110–113 (AANY) each bind NAD(+). Histidine 144 (proton donor/acceptor) is an active-site residue. (S)-2,3,4,5-tetrahydrodipicolinate is bound at residue histidine 145. Lysine 148 serves as the catalytic Proton donor. 154 to 155 (GT) serves as a coordination point for (S)-2,3,4,5-tetrahydrodipicolinate.

This sequence belongs to the DapB family.

It is found in the cytoplasm. The enzyme catalyses (S)-2,3,4,5-tetrahydrodipicolinate + NAD(+) + H2O = (2S,4S)-4-hydroxy-2,3,4,5-tetrahydrodipicolinate + NADH + H(+). It carries out the reaction (S)-2,3,4,5-tetrahydrodipicolinate + NADP(+) + H2O = (2S,4S)-4-hydroxy-2,3,4,5-tetrahydrodipicolinate + NADPH + H(+). It participates in amino-acid biosynthesis; L-lysine biosynthesis via DAP pathway; (S)-tetrahydrodipicolinate from L-aspartate: step 4/4. Catalyzes the conversion of 4-hydroxy-tetrahydrodipicolinate (HTPA) to tetrahydrodipicolinate. This is 4-hydroxy-tetrahydrodipicolinate reductase from Gluconacetobacter diazotrophicus (strain ATCC 49037 / DSM 5601 / CCUG 37298 / CIP 103539 / LMG 7603 / PAl5).